A 207-amino-acid polypeptide reads, in one-letter code: Large ribosomal subunit protein uL4 (207 aa).

Positions 62 to 85 (KKPFKQKGTGQARQGCRRAPQYPG) are disordered.

This sequence belongs to the universal ribosomal protein uL4 family. As to quaternary structure, part of the 50S ribosomal subunit.

One of the primary rRNA binding proteins, this protein initially binds near the 5'-end of the 23S rRNA. It is important during the early stages of 50S assembly. It makes multiple contacts with different domains of the 23S rRNA in the assembled 50S subunit and ribosome. Its function is as follows. Forms part of the polypeptide exit tunnel. This is Large ribosomal subunit protein uL4 from Geobacter sp. (strain M21).